The following is a 597-amino-acid chain: Elongation factor 4 (597 aa).

The tr-type G domain maps to 2 to 184 (KNIRNFSIIA…TMIAKIPPPV (183 aa)). GTP-binding positions include 14-19 (DHGKST) and 131-134 (NKID).

It belongs to the TRAFAC class translation factor GTPase superfamily. Classic translation factor GTPase family. LepA subfamily.

It is found in the cell inner membrane. The catalysed reaction is GTP + H2O = GDP + phosphate + H(+). Its function is as follows. Required for accurate and efficient protein synthesis under certain stress conditions. May act as a fidelity factor of the translation reaction, by catalyzing a one-codon backward translocation of tRNAs on improperly translocated ribosomes. Back-translocation proceeds from a post-translocation (POST) complex to a pre-translocation (PRE) complex, thus giving elongation factor G a second chance to translocate the tRNAs correctly. Binds to ribosomes in a GTP-dependent manner. The polypeptide is Elongation factor 4 (Methylobacillus flagellatus (strain ATCC 51484 / DSM 6875 / VKM B-1610 / KT)).